A 142-amino-acid polypeptide reads, in one-letter code: Large ribosomal subunit protein uL13 (142 aa).

This sequence belongs to the universal ribosomal protein uL13 family. In terms of assembly, part of the 50S ribosomal subunit.

In terms of biological role, this protein is one of the early assembly proteins of the 50S ribosomal subunit, although it is not seen to bind rRNA by itself. It is important during the early stages of 50S assembly. The sequence is that of Large ribosomal subunit protein uL13 from Pseudomonas fluorescens (strain ATCC BAA-477 / NRRL B-23932 / Pf-5).